The chain runs to 114 residues: V-type proton ATPase subunit G (114 aa).

At Ser-2 the chain carries N-acetylserine.

The protein belongs to the V-ATPase G subunit family. As to quaternary structure, V-ATPase is a heteromultimeric enzyme composed of a peripheral catalytic V1 complex (components A to H) attached to an integral membrane V0 proton pore complex (components: a, c, c', c'', d, e, f and VOA1).

It is found in the vacuole membrane. Functionally, subunit of the V1 complex of vacuolar(H+)-ATPase (V-ATPase), a multisubunit enzyme composed of a peripheral complex (V1) that hydrolyzes ATP and a membrane integral complex (V0) that translocates protons. V-ATPase is responsible for acidifying and maintaining the pH of intracellular compartments. The sequence is that of V-type proton ATPase subunit G from Saccharomyces cerevisiae (strain ATCC 204508 / S288c) (Baker's yeast).